The primary structure comprises 185 residues: MKSGEKDYSVKEAMIFSQRIAQLSKALWKCVEKDWQQWIKPYDLNINEHHILTIAYHLKGASISEIAKFGVMHVSTAFNFSKKLEERGYLVFSKKEDDKRNTYIEITDKGEELLLRLMEEYDPENNSVFNGALALRNFYGKFPENIELIAILRNIYGQDFIDIFEKSLEDIEENFTESDQKLVKK.

Positions 13–157 constitute an HTH marR-type domain; sequence AMIFSQRIAQ…LIAILRNIYG (145 aa). A DNA-binding region (H-T-H motif) is located at residues 63-86; sequence ISEIAKFGVMHVSTAFNFSKKLEE.

As to quaternary structure, homodimer.

Its function is as follows. Negative regulator of protease production and sporulation. The sequence is that of HTH-type transcriptional regulator Hpr from Bacillus cereus (strain G9842).